The sequence spans 625 residues: Phosphomethylpyrimidine synthase (625 aa).

Substrate contacts are provided by residues Asn-230, Met-259, Tyr-288, His-324, 344-346 (SRG), 385-388 (DGLR), and Glu-424. Zn(2+) is bound at residue His-428. Tyr-451 provides a ligand contact to substrate. His-492 lines the Zn(2+) pocket. [4Fe-4S] cluster-binding residues include Cys-572, Cys-575, and Cys-580.

Belongs to the ThiC family. Homodimer. Requires [4Fe-4S] cluster as cofactor.

It carries out the reaction 5-amino-1-(5-phospho-beta-D-ribosyl)imidazole + S-adenosyl-L-methionine = 4-amino-2-methyl-5-(phosphooxymethyl)pyrimidine + CO + 5'-deoxyadenosine + formate + L-methionine + 3 H(+). The protein operates within cofactor biosynthesis; thiamine diphosphate biosynthesis. In terms of biological role, catalyzes the synthesis of the hydroxymethylpyrimidine phosphate (HMP-P) moiety of thiamine from aminoimidazole ribotide (AIR) in a radical S-adenosyl-L-methionine (SAM)-dependent reaction. The sequence is that of Phosphomethylpyrimidine synthase from Xanthomonas euvesicatoria pv. vesicatoria (strain 85-10) (Xanthomonas campestris pv. vesicatoria).